The sequence spans 357 residues: Protein RecA (357 aa).

71-78 (GPESSGKT) provides a ligand contact to ATP.

It belongs to the RecA family.

Its subcellular location is the cytoplasm. In terms of biological role, can catalyze the hydrolysis of ATP in the presence of single-stranded DNA, the ATP-dependent uptake of single-stranded DNA by duplex DNA, and the ATP-dependent hybridization of homologous single-stranded DNAs. It interacts with LexA causing its activation and leading to its autocatalytic cleavage. This chain is Protein RecA, found in Ehrlichia canis (strain Jake).